The chain runs to 482 residues: GTPase Obg (482 aa).

The Obg domain occupies 2-159 (PRFIDRVVVH…RELTLELKTV (158 aa)). The 182-residue stretch at 160-341 (ADVGLVGFPS…LIFALWDMVA (182 aa)) folds into the OBG-type G domain. Residues 166 to 173 (GFPSAGKS), 191 to 195 (FTTLA), 212 to 215 (DVPG), 292 to 295 (NKID), and 322 to 324 (STV) each bind GTP. Mg(2+) is bound by residues Ser173 and Thr193. The 79-residue stretch at 359-437 (PIPVDETAFS…IGDMTFDWEP (79 aa)) folds into the OCT domain. Positions 450–482 (RGTDVRLEQTDRVGADERKAARKARRQSDDGEE) are disordered. Basic and acidic residues predominate over residues 452–468 (TDVRLEQTDRVGADERK).

This sequence belongs to the TRAFAC class OBG-HflX-like GTPase superfamily. OBG GTPase family. Monomer. Mg(2+) serves as cofactor.

It localises to the cytoplasm. Its function is as follows. An essential GTPase which binds GTP, GDP and possibly (p)ppGpp with moderate affinity, with high nucleotide exchange rates and a fairly low GTP hydrolysis rate. Plays a role in control of the cell cycle, stress response, ribosome biogenesis and in those bacteria that undergo differentiation, in morphogenesis control. The sequence is that of GTPase Obg from Mycolicibacterium gilvum (strain PYR-GCK) (Mycobacterium gilvum (strain PYR-GCK)).